Consider the following 449-residue polypeptide: MSHDSVPSPITARAGTPLRGRLRPPGDKSISHRAMILGLLSLGETRVEGLLEGDDVLRTAAAARALGAGIDRDGPGRWRVRGVGIGGLSDPEGVLDFGNAGTGSRLMMGVVGGQPVTATFDGDASLRKRPMRRILDPLVQMGAQILSEQAGGRVPLTLRGPEEAIPITYATPVASAQVKSAVLLAGLNAPGTTTVIEAAATRDHTERMLRLFGAEVTVAAHGPAGHGRAIALTGQPTLRAAEVIVPADPSSAAFPIVAALIVPGSDVVIEGVMMNPLRTGLITTLIEMGADIARLNERDEGGETVADLRVRASRLAGVTVPPERAPAMIDEYPVLAVAAAFAEGTTRMQGLHELRVKESDRLAAVADGLRANGVAHAVEGDDLIVHGDGRPAPGGGTVATHLDHRIAMAFLVMGLAAGEPVTVDDGAMIATSYPAFLADLRGLGAAFAE.

The interval 1 to 29 is disordered; sequence MSHDSVPSPITARAGTPLRGRLRPPGDKS. 3 residues coordinate 3-phosphoshikimate: Lys28, Ser29, and Arg33. Lys28 is a phosphoenolpyruvate binding site. Phosphoenolpyruvate is bound by residues Gly101 and Arg129. Ser175, Gln177, Asp330, and Lys357 together coordinate 3-phosphoshikimate. Gln177 provides a ligand contact to phosphoenolpyruvate. The active-site Proton acceptor is Asp330. The phosphoenolpyruvate site is built by Arg361 and Arg405.

This sequence belongs to the EPSP synthase family. In terms of assembly, monomer.

The protein resides in the cytoplasm. The enzyme catalyses 3-phosphoshikimate + phosphoenolpyruvate = 5-O-(1-carboxyvinyl)-3-phosphoshikimate + phosphate. It functions in the pathway metabolic intermediate biosynthesis; chorismate biosynthesis; chorismate from D-erythrose 4-phosphate and phosphoenolpyruvate: step 6/7. Functionally, catalyzes the transfer of the enolpyruvyl moiety of phosphoenolpyruvate (PEP) to the 5-hydroxyl of shikimate-3-phosphate (S3P) to produce enolpyruvyl shikimate-3-phosphate and inorganic phosphate. The protein is 3-phosphoshikimate 1-carboxyvinyltransferase of Methylobacterium sp. (strain 4-46).